The sequence spans 250 residues: Putative endonuclease (250 aa).

Putative endonuclease. The chain is Putative endonuclease from Escherichia coli (Enterobacteria phage T5).